Consider the following 272-residue polypeptide: D-aminoacyl-tRNA deacylase (272 aa).

The protein belongs to the DtdA deacylase family. As to quaternary structure, monomer. It depends on Zn(2+) as a cofactor.

The enzyme catalyses a D-aminoacyl-tRNA + H2O = a tRNA + a D-alpha-amino acid + H(+). It carries out the reaction glycyl-tRNA(Ala) + H2O = tRNA(Ala) + glycine + H(+). In terms of biological role, D-aminoacyl-tRNA deacylase with broad substrate specificity. By recycling D-aminoacyl-tRNA to D-amino acids and free tRNA molecules, this enzyme counteracts the toxicity associated with the formation of D-aminoacyl-tRNA entities in vivo. The protein is D-aminoacyl-tRNA deacylase of Thermococcus onnurineus (strain NA1).